A 296-amino-acid polypeptide reads, in one-letter code: 4-diphosphocytidyl-2-C-methyl-D-erythritol kinase (296 aa).

Lys-13 is a catalytic residue. Residue 98 to 108 (PVAAGIGGGSA) participates in ATP binding. Residue Asp-140 is part of the active site.

The protein belongs to the GHMP kinase family. IspE subfamily.

The enzyme catalyses 4-CDP-2-C-methyl-D-erythritol + ATP = 4-CDP-2-C-methyl-D-erythritol 2-phosphate + ADP + H(+). Its pathway is isoprenoid biosynthesis; isopentenyl diphosphate biosynthesis via DXP pathway; isopentenyl diphosphate from 1-deoxy-D-xylulose 5-phosphate: step 3/6. Catalyzes the phosphorylation of the position 2 hydroxy group of 4-diphosphocytidyl-2C-methyl-D-erythritol. The polypeptide is 4-diphosphocytidyl-2-C-methyl-D-erythritol kinase (Rhodopseudomonas palustris (strain HaA2)).